Here is a 336-residue protein sequence, read N- to C-terminus: MDEIQDIEGLTRRALQAISRIDTLRDLTKLKNDNLGSTSWLAKYSASIKILSQEKKPIIGKAVSEARRKILEACQDRDLALRLNAQNEQFTRETLDITALPTRIFPGARHPIHVLQDKILDFFLMRGWSVVEGPELESEWLNFDALNIGPFHPAREESDTIFAEPRSASMLLRTHTSPVQLRALVSNPLPLYCVSSGKVFRSDPLDATHTPVFHQLEGLVCDRNITLGHLKGTVEDLARYLFGAEVNLRMRCNYFPFTEPSAEFDISRDGIDWTEWGGCGLVNSKVLSMAGVDTVHYTGFAFGFGLERTLQFIHSLSDMRDIVEGDIRFSQQFGLK.

Residue Glu259 participates in Mg(2+) binding.

This sequence belongs to the class-II aminoacyl-tRNA synthetase family. Phe-tRNA synthetase alpha subunit type 1 subfamily. In terms of assembly, tetramer of two alpha and two beta subunits. Mg(2+) is required as a cofactor.

It localises to the cytoplasm. The enzyme catalyses tRNA(Phe) + L-phenylalanine + ATP = L-phenylalanyl-tRNA(Phe) + AMP + diphosphate + H(+). The polypeptide is Phenylalanine--tRNA ligase alpha subunit (Tropheryma whipplei (strain TW08/27) (Whipple's bacillus)).